The chain runs to 463 residues: NADH-quinone oxidoreductase subunit N (463 aa).

14 helical membrane-spanning segments follow: residues asparagine 2–phenylalanine 22, glycine 25–phenylalanine 45, phenylalanine 61–histidine 81, isoleucine 91–serine 110, leucine 114–alanine 133, phenylalanine 149–alanine 169, isoleucine 189–valine 209, proline 223–phenylalanine 243, phenylalanine 264–leucine 284, methionine 292–alanine 312, valine 317–leucine 337, alanine 362–phenylalanine 382, glycine 395–phenylalanine 415, and proline 434–phenylalanine 454.

The protein belongs to the complex I subunit 2 family. As to quaternary structure, NDH-1 is composed of 14 different subunits. Subunits NuoA, H, J, K, L, M, N constitute the membrane sector of the complex.

The protein localises to the cell inner membrane. It catalyses the reaction a quinone + NADH + 5 H(+)(in) = a quinol + NAD(+) + 4 H(+)(out). In terms of biological role, NDH-1 shuttles electrons from NADH, via FMN and iron-sulfur (Fe-S) centers, to quinones in the respiratory chain. The immediate electron acceptor for the enzyme in this species is believed to be a menaquinone. Couples the redox reaction to proton translocation (for every two electrons transferred, four hydrogen ions are translocated across the cytoplasmic membrane), and thus conserves the redox energy in a proton gradient. This Flavobacterium johnsoniae (strain ATCC 17061 / DSM 2064 / JCM 8514 / BCRC 14874 / CCUG 350202 / NBRC 14942 / NCIMB 11054 / UW101) (Cytophaga johnsonae) protein is NADH-quinone oxidoreductase subunit N.